Here is a 67-residue protein sequence, read N- to C-terminus: ATP synthase F(0) complex subunit 8 (67 aa).

A helical transmembrane segment spans residues Thr8–Leu24. An N6-acetyllysine; alternate modification is found at Lys54. Lys54 is modified (N6-succinyllysine; alternate). Position 57 is an N6-acetyllysine (Lys57).

It belongs to the ATPase protein 8 family. Component of the ATP synthase complex composed at least of ATP5F1A/subunit alpha, ATP5F1B/subunit beta, ATP5MC1/subunit c (homooctomer), MT-ATP6/subunit a, MT-ATP8/subunit 8, ATP5ME/subunit e, ATP5MF/subunit f, ATP5MG/subunit g, ATP5MK/subunit k, ATP5MJ/subunit j, ATP5F1C/subunit gamma, ATP5F1D/subunit delta, ATP5F1E/subunit epsilon, ATP5PF/subunit F6, ATP5PB/subunit b, ATP5PD/subunit d, ATP5PO/subunit OSCP. ATP synthase complex consists of a soluble F(1) head domain (subunits alpha(3) and beta(3)) - the catalytic core - and a membrane F(0) domain - the membrane proton channel (subunits c, a, 8, e, f, g, k and j). These two domains are linked by a central stalk (subunits gamma, delta, and epsilon) rotating inside the F1 region and a stationary peripheral stalk (subunits F6, b, d, and OSCP). Interacts with PRICKLE3.

The protein resides in the mitochondrion membrane. Subunit 8, of the mitochondrial membrane ATP synthase complex (F(1)F(0) ATP synthase or Complex V) that produces ATP from ADP in the presence of a proton gradient across the membrane which is generated by electron transport complexes of the respiratory chain. ATP synthase complex consist of a soluble F(1) head domain - the catalytic core - and a membrane F(1) domain - the membrane proton channel. These two domains are linked by a central stalk rotating inside the F(1) region and a stationary peripheral stalk. During catalysis, ATP synthesis in the catalytic domain of F(1) is coupled via a rotary mechanism of the central stalk subunits to proton translocation. In vivo, can only synthesize ATP although its ATP hydrolase activity can be activated artificially in vitro. Part of the complex F(0) domain. The protein is ATP synthase F(0) complex subunit 8 of Glis glis (Fat dormouse).